The primary structure comprises 553 residues: Transcription factor IIIB 70 kDa subunit (553 aa).

The TFIIB-type zinc finger occupies 6-39 (KQQKCKTCGHTQFDVNRYTAAGDVSCLRCGTVLE). The Zn(2+) site is built by C10, C13, C31, and C34. 2 repeat units span residues 98-174 (IAAA…KMVK) and 193-272 (FVEK…EFKK). An interaction with TBP and with the Pol III subunit C34 region spans residues 98-272 (IAAALKIPDY…LQRRLNEFKK (175 aa)). The tract at residues 281–553 (KSFREVENLE…KGLLGGNMGF (273 aa)) is interaction with TBP. The segment at 473–523 (KQEADELTGNTSKSSSGNRRKRNKSSLPAELRKELGDIDLDEDGTPRSAAD) is disordered. Residues 480–489 (TGNTSKSSSG) are compositionally biased toward low complexity.

This sequence belongs to the TFIIB family. In terms of assembly, TFIIIB comprises the TATA-binding protein (TBP), the B-related factor (BRF) and a 70 kDa polypeptide.

The protein localises to the nucleus. Its function is as follows. General activator of RNA polymerase III transcription. Interacts with TBP. Binds to Pol III subunit C34 and to the TAU135 component of TFIIIC. The polypeptide is Transcription factor IIIB 70 kDa subunit (TDS4) (Candida albicans (strain SC5314 / ATCC MYA-2876) (Yeast)).